The sequence spans 45 residues: Caltrin-like protein 1 (45 aa).

Residues 8-45 enclose the Kazal-like domain; that stretch reads DSDRPNCSRYVQHLYMCTKELDPVCGTDGHTYGNRSIF. Residues N13 and N41 are each glycosylated (N-linked (GlcNAc...) asparagine).

Glycosylated.

It localises to the secreted. Inhibits calcium transport into spermatozoa. This chain is Caltrin-like protein 1, found in Cavia porcellus (Guinea pig).